The primary structure comprises 227 residues: Chaperone protein FocC (227 aa).

The signal sequence occupies residues 1–21; it reads MRIWAVLASFLVFFYIPQSYA.

It belongs to the periplasmic pilus chaperone family.

Its subcellular location is the periplasm. Functionally, involved in the biogenesis of the F1C fimbriae. In Escherichia coli O6:H1 (strain CFT073 / ATCC 700928 / UPEC), this protein is Chaperone protein FocC (focC).